The sequence spans 386 residues: UDP-N-acetylbacillosamine transaminase (386 aa).

Substrate is bound by residues 25–28 (NYIA), alanine 56, and serine 179. At lysine 184 the chain carries N6-(pyridoxal phosphate)lysine. Residues asparagine 227 and 325 to 328 (QIET) each bind substrate.

Belongs to the DegT/DnrJ/EryC1 family. Pyridoxal 5'-phosphate serves as cofactor.

It catalyses the reaction UDP-N-acetylbacillosamine + 2-oxoglutarate = UDP-2-acetamido-2,6-dideoxy-alpha-D-xylo-hex-4-ulose + L-glutamate. Its pathway is protein modification; protein glycosylation. In terms of biological role, aminotransferase involved in the bacillosamine biosynthesis pathway by producing UDP-4-amino-4,6-dideoxy-alpha-D-GlcNAc (UDP-2-acetamido-4-amino-2,4,6-trideoxy-alpha-D-glucopyranose), a precursor used in the production of the glycan component 2,4-diacetamido-2,4,6-trideoxy-alpha-D-glucopyranose. Required for host colonization and virulence. Involved in the N-linked protein glycosylation pathway. This is UDP-N-acetylbacillosamine transaminase (pglE) from Campylobacter jejuni subsp. jejuni serotype O:2 (strain ATCC 700819 / NCTC 11168).